The chain runs to 231 residues: Protein OPG061 (231 aa).

The protein belongs to the orthopoxvirus OPG058 family.

The protein resides in the host nucleus. It is found in the host nucleolus. The chain is Protein OPG061 (OPG061) from Vaccinia virus (strain L-IVP) (VACV).